An 876-amino-acid chain; its full sequence is Extended synaptotagmin-2-B (876 aa).

The disordered stretch occupies residues 1-21 (MASESGAEKGPPTTPAENGQP). Over 1–35 (MASESGAEKGPPTTPAENGQPGVPIAAAVAADEQG) the chain is Cytoplasmic. A helical transmembrane segment spans residues 36–56 (MISVDIAGLFYQFSKTFILIF). At 57-59 (PVY) the chain is on the lumenal side. The helical transmembrane segment at 60–80 (VLGYFGLSFSWLLIALVLLLW) threads the bilayer. Over 81-876 (WRRNKGNKNS…EDGTRAAASS (796 aa)) the chain is Cytoplasmic. The 180-residue stretch at 123–302 (DIERAEWLNK…LPNRITVPLV (180 aa)) folds into the SMP-LTD domain. C2 domains follow at residues 301–421 (LVSD…DEWF) and 446–592 (NLDQ…HLNN). Lys-332, Asp-333, Asp-345, Asp-392, Glu-393, Asp-394, Asp-396, Asp-398, and Asp-399 together coordinate Ca(2+). The interval 614–714 (VRSPDEQHTS…KEPTPSIASD (101 aa)) is disordered. A compositionally biased stretch (pro residues) spans 636-656 (PPTPQMPAPSPAVAHKPPPTP). Residues 686–698 (SSSSLSGSSFTYS) are compositionally biased toward low complexity. Residues 741–863 (PLGQIQLTIR…DAAKGWTQWF (123 aa)) form the C2 3 domain. The segment at 788–795 (KRRSGRRK) is required for phosphatidylinositol 4,5-bisphosphate-dependent location at the cell membrane.

The protein belongs to the extended synaptotagmin family. As to quaternary structure, interacts with fgfr1 that has been activated by fgf1 binding. Interacts (via C2 domains) with the AP-2 complex (via an alpha subunit). Identified in a complex with the AP-2 complex and fgfr1.

The protein localises to the cell membrane. The protein resides in the endoplasmic reticulum membrane. Tethers the endoplasmic reticulum to the cell membrane and promotes the formation of appositions between the endoplasmic reticulum and the cell membrane. Binds glycerophospholipids in a barrel-like domain and may play a role in cellular lipid transport. Plays a role in the rapid internalization of fgfr1 that has been activated by fgf1 binding; this occurs most likely via the AP-2 complex. Required for normal fgf signaling and the activation of downstream signaling cascades via its role in the internalization of activated fgfr1. Required for normal embryonic development via its role in fgf signaling and the downstream regulation of t/xBRA expression. This is Extended synaptotagmin-2-B (esyt2-b) from Xenopus laevis (African clawed frog).